A 481-amino-acid polypeptide reads, in one-letter code: Replication factor C large subunit (481 aa).

43 to 50 is a binding site for ATP; that stretch reads GKPGIGKT. Basic and acidic residues-rich tracts occupy residues 408–433 and 441–457; these read KVEREKEPEPKKKGRKKAESPAKDAD and VPKEELPVKSAPEERPA. A disordered region spans residues 408–481; the sequence is KVEREKEPEP…HNQSTLFDGF (74 aa). Residues 471–481 are compositionally biased toward polar residues; it reads AHNQSTLFDGF.

This sequence belongs to the activator 1 small subunits family. RfcL subfamily. Heteromultimer composed of small subunits (RfcS) and large subunits (RfcL).

Its function is as follows. Part of the RFC clamp loader complex which loads the PCNA sliding clamp onto DNA. In Methanoregula boonei (strain DSM 21154 / JCM 14090 / 6A8), this protein is Replication factor C large subunit.